Here is a 162-residue protein sequence, read N- to C-terminus: Ribosomal RNA large subunit methyltransferase H (162 aa).

Leucine 78 and glycine 110 together coordinate S-adenosyl-L-methionine.

It belongs to the RNA methyltransferase RlmH family. In terms of assembly, homodimer.

Its subcellular location is the cytoplasm. The enzyme catalyses pseudouridine(1915) in 23S rRNA + S-adenosyl-L-methionine = N(3)-methylpseudouridine(1915) in 23S rRNA + S-adenosyl-L-homocysteine + H(+). In terms of biological role, specifically methylates the pseudouridine at position 1915 (m3Psi1915) in 23S rRNA. This is Ribosomal RNA large subunit methyltransferase H from Bradyrhizobium sp. (strain ORS 278).